A 224-amino-acid polypeptide reads, in one-letter code: Type II restriction enzyme BstVI (224 aa).

Belongs to the XhoI type II restriction endonuclease family.

The enzyme catalyses Endonucleolytic cleavage of DNA to give specific double-stranded fragments with terminal 5'-phosphates.. Functionally, a P subtype restriction enzyme that recognizes the double-stranded sequence 5'-CTCGAG-3' and cleaves after C-1. The protein is Type II restriction enzyme BstVI of Geobacillus stearothermophilus (Bacillus stearothermophilus).